The primary structure comprises 89 residues: MEYQYPLDYDWSNEEMVTIVKFYEAIEKAYEKGIVREELMGLYRRFKEIVPSKAEEKKIDKEFQEVSGYSIYRAIQKAKEIEEEKLVKM.

It belongs to the UPF0223 family.

This Bacillus cereus (strain ATCC 10987 / NRS 248) protein is UPF0223 protein BCE_4008.